A 164-amino-acid chain; its full sequence is Dehydrin Rab16B (164 aa).

Residues 1 to 164 form a disordered region; sequence MENYQGQHGY…KIKEKLPGQH (164 aa). Over residues 25 to 53 the composition is skewed to gly residues; sequence GQYGGGATAPGGGHGAMGMGGHAGAGAGG. Residues 107 to 117 show a composition bias toward low complexity; sequence GNNQQQQQMMG. A compositionally biased stretch (basic and acidic residues) spans 147–164; sequence GEKKGFMDKIKEKLPGQH.

It belongs to the plant dehydrin family.

This Oryza sativa subsp. indica (Rice) protein is Dehydrin Rab16B (RAB16B).